The following is a 342-amino-acid chain: Isopentenyl-diphosphate delta-isomerase (342 aa).

11-12 (RK) provides a ligand contact to substrate. FMN-binding positions include Ser-68, 69-71 (SMT), Ser-99, and Asn-127. Residue 99–101 (SMR) participates in substrate binding. Glu-163 contributes to the Mg(2+) binding site. Residues Lys-194, Thr-224, and 295-296 (AG) each bind FMN.

This sequence belongs to the IPP isomerase type 2 family. Homooctamer. Dimer of tetramers. The cofactor is FMN. NADPH serves as cofactor. Requires Mg(2+) as cofactor.

It localises to the cytoplasm. It catalyses the reaction isopentenyl diphosphate = dimethylallyl diphosphate. In terms of biological role, involved in the biosynthesis of isoprenoids. Catalyzes the 1,3-allylic rearrangement of the homoallylic substrate isopentenyl (IPP) to its allylic isomer, dimethylallyl diphosphate (DMAPP). This is Isopentenyl-diphosphate delta-isomerase from Rickettsia typhi (strain ATCC VR-144 / Wilmington).